A 202-amino-acid polypeptide reads, in one-letter code: Transcription antitermination protein NusB (202 aa).

The segment covering 1 to 11 has biased composition (basic and acidic residues); sequence MTEERTADNKA. 2 disordered regions span residues 1–21 and 169–202; these read MTEE…KRHG and SAAK…SDEA.

This sequence belongs to the NusB family.

Functionally, involved in transcription antitermination. Required for transcription of ribosomal RNA (rRNA) genes. Binds specifically to the boxA antiterminator sequence of the ribosomal RNA (rrn) operons. In Corynebacterium jeikeium (strain K411), this protein is Transcription antitermination protein NusB.